Here is a 98-residue protein sequence, read N- to C-terminus: NADH-ubiquinone oxidoreductase chain 4L (98 aa).

Helical transmembrane passes span 1 to 21 (MSLTYMNMFMAFTISLLGLLL), 29 to 49 (SLLCLEGMMLSLFVMMTMIIL), and 61 to 81 (IILLVFAACEAALGLSLLVMV).

Belongs to the complex I subunit 4L family. As to quaternary structure, core subunit of respiratory chain NADH dehydrogenase (Complex I) which is composed of 45 different subunits.

The protein resides in the mitochondrion inner membrane. The catalysed reaction is a ubiquinone + NADH + 5 H(+)(in) = a ubiquinol + NAD(+) + 4 H(+)(out). Core subunit of the mitochondrial membrane respiratory chain NADH dehydrogenase (Complex I) which catalyzes electron transfer from NADH through the respiratory chain, using ubiquinone as an electron acceptor. Part of the enzyme membrane arm which is embedded in the lipid bilayer and involved in proton translocation. This Platyrrhinus brachycephalus (Short-headed broad-nosed bat) protein is NADH-ubiquinone oxidoreductase chain 4L (MT-ND4L).